The sequence spans 302 residues: Heme A synthase (302 aa).

Residues 1-8 (MFRKQNLK) lie on the Cytoplasmic side of the membrane. Residues 9–29 (WLGVLATIIMTFVQLGGALVT) traverse the membrane as a helical segment. The Extracellular segment spans residues 30 to 67 (KTGSEDGCGSSWPLCNGALLPENLPIQTIIELSHRAVS). A disulfide bridge links Cys37 with Cys44. Glu60 is a catalytic residue. His63 lines the heme o pocket. Residues 68–88 (AISLIVVLWLVITAWKNIGYI) form a helical membrane-spanning segment. Topologically, residues 89–93 (KEIKP) are cytoplasmic. A helical transmembrane segment spans residues 94 to 114 (LSIISVGFLLVQALVGAAAVI). The Extracellular segment spans residues 115–125 (WQQNPYVLALH). His125 contacts heme o. A helical transmembrane segment spans residues 126–146 (FGISLISFSSVFLMTLIIFSI). The Cytoplasmic portion of the chain corresponds to 147–161 (DKKYEADILFIHKPL). The chain crosses the membrane as a helical span at residues 162 to 182 (RILTWLMAIIVYLTIYTGALV). Residues 183–215 (RHTKSSLAYGAWPIPFDDIVPHNAHDWVQFSHR) are Extracellular-facing. His214 contacts heme b. Residues 216 to 236 (GMALITFIWIMITFIHAIKNY) form a helical membrane-spanning segment. Residues 237 to 244 (SDNRTVRY) are Cytoplasmic-facing. Residues 245–265 (GYTASFILVILQVITGALSVI) traverse the membrane as a helical segment. Over 266–270 (TNVNL) the chain is Extracellular. Residues 271–291 (IIALFHALFITYLFGMIAYFI) form a helical membrane-spanning segment. Position 276 (His276) interacts with heme b. Residues 292-302 (LLMLRTTRSQK) lie on the Cytoplasmic side of the membrane.

It belongs to the COX15/CtaA family. Type 1 subfamily. Interacts with CtaB. The cofactor is heme b.

It is found in the cell membrane. The enzyme catalyses Fe(II)-heme o + 2 A + H2O = Fe(II)-heme a + 2 AH2. Its pathway is porphyrin-containing compound metabolism; heme A biosynthesis; heme A from heme O: step 1/1. Catalyzes the conversion of heme O to heme A by two successive hydroxylations of the methyl group at C8. The first hydroxylation forms heme I, the second hydroxylation results in an unstable dihydroxymethyl group, which spontaneously dehydrates, resulting in the formyl group of heme A. This Staphylococcus epidermidis (strain ATCC 35984 / DSM 28319 / BCRC 17069 / CCUG 31568 / BM 3577 / RP62A) protein is Heme A synthase.